The chain runs to 1407 residues: DNA-directed RNA polymerase subunit beta' (1407 aa).

Positions 70, 72, 85, and 88 each coordinate Zn(2+). Residues Asp460, Asp462, and Asp464 each contribute to the Mg(2+) site. The Zn(2+) site is built by Cys814, Cys888, Cys895, and Cys898. Residue Lys972 is modified to N6-acetyllysine.

The protein belongs to the RNA polymerase beta' chain family. The RNAP catalytic core consists of 2 alpha, 1 beta, 1 beta' and 1 omega subunit. When a sigma factor is associated with the core the holoenzyme is formed, which can initiate transcription. The cofactor is Mg(2+). Zn(2+) serves as cofactor.

It catalyses the reaction RNA(n) + a ribonucleoside 5'-triphosphate = RNA(n+1) + diphosphate. DNA-dependent RNA polymerase catalyzes the transcription of DNA into RNA using the four ribonucleoside triphosphates as substrates. This is DNA-directed RNA polymerase subunit beta' from Shigella sonnei (strain Ss046).